We begin with the raw amino-acid sequence, 1262 residues long: MGTGDFICISMTGGAPWGFRLQGGKEEKQPLQVAKIRSQSKASDSGLCVGDEVVSINGNPCADLTYPEVIKLMESITDSLHLLIKRPTSGTSEALDSETENTNHQHLPHGGPMESTTLQIQHAAKTQGKDFLLASVQTSAPRTEDQGNAWGYAECTTEDQVSQMPGSQEGHLVEEVILRKKPEAGQPGHVVELQLSLSKERQRCTSDPIVTLLGNEKFKSPDPDWGTQHGRTVHINSIPAPEKADTSLTSGTTVQTSSGRELTVIQGRDPGGTGLPQVEVILDCSDRLKAEECRLQAGRGCVASPVEGGRSEAPPSLVSFAVSSEGTEQGEDQRSGKDQGRPHKHRARHARLRRSESLSEKQVKEAKSKCKSIALLLTDAPNPNSKGVLMFKKRRRRARKYTLVSYGTGELEREEEEEDQEAGDKDEISDLAFLGTSESEVDEELLSDVDDNTQVVNFDWDSGLVDIEKRLNRGDKMEMLPDTTGKGALMFAKRRERMEQFTAQNEEEKTGGLAGGGSDALQTDGLRTMTSYQRKEESVRMQSSVSESSFQMGRSLGSVPQQNGFSGVSETAGPQRMIPMNRTAKPFLGSVNQTAAPFSPTQSVTSPIPDFPAPPPYSAVSPPPEAFSRGISSPVAGPAQPPPWPQPAPWSQPAFYDSSEQIASRDERIAVPAKRTGILQEAKRRGTTKPMFTFKETKVSPNPELLSLLQNAEGKRGTGAGGDSGPEEDYLSLGAEACNFMQSSAKQKTPPPVAPKPAVKTSSSSQPVAPVSPVWSPGVAPAQGPAFSTTNPPNPPQVTAVSSIKIAQPTCPPARPASALNLAGPFKGPQAAVVSHNYTPKPSAPTPLVNAAPAGAGGPSNELPGMSGKGAQLFAKRQSRMEKYVVDSDTVQAHTVRAQSPTPSLPASWKYSSNVRAPPPVAYNPIHSPSYPLAAIKSQPPGAQASKTSKKKGKKPLNTLDVMKHQPYQLNASLFTFQPPDSKDGLPQKSTVKVSSVAPAMKQALPPRQADIGSPTNAKASSVYSVPAYTSQPNFFAEATSPVSASPVPVSVPTSPKQETTSTSYFVAPRPKFSAKKSGVTVQENWRSLSLPGRAAPPIMSAPPWLCQPAYSYSSKPTLEQEKANKRPTPWEAAAKSPLGLVDEAFRPRNIEESIVANVVSAARRKVFAGSQEDWKERLSFVPQTQKTSMSFSERREYNVPSPVNSHVSSHSLYSSQLPYVCYRKESRNDLKAMSMDTRSEYCLPLGGYDYNPHPRGWRHQP.

The interaction with VPS18 stretch occupies residues 1–174; that stretch reads MGTGDFICIS…PGSQEGHLVE (174 aa). One can recognise a PDZ domain in the interval 6 to 88; that stretch reads FICISMTGGA…SLHLLIKRPT (83 aa). Polar residues-rich tracts occupy residues 89 to 105 and 246 to 260; these read SGTSEALDSETENTNHQ and TSLTSGTTVQTSSGR. Disordered regions lie at residues 89 to 114 and 239 to 276; these read SGTSEALDSETENTNHQHLPHGGPME and PAPEKADTSLTSGTTVQTSSGRELTVIQGRDPGGTGLP. Phosphoserine is present on residues S304, S323, and S324. The interval 323–363 is disordered; sequence SSEGTEQGEDQRSGKDQGRPHKHRARHARLRRSESLSEKQV. At T327 the chain carries Phosphothreonine. The segment covering 331–341 has biased composition (basic and acidic residues); that stretch reads EDQRSGKDQGR. Over residues 342-352 the composition is skewed to basic residues; that stretch reads PHKHRARHARL. Residues 353-363 are compositionally biased toward basic and acidic residues; the sequence is RRSESLSEKQV. The Nuclear localization signal signature appears at 392–400; that stretch reads KKRRRRARK. Interaction with ACTN2 stretches follow at residues 477-658, 659-922, and 899-1153; these read MEML…FYDS, SEQI…PPVA, and QSPT…NIEE. Disordered regions lie at residues 503-576 and 592-703; these read AQNE…GPQR and NQTA…SPNP. S518, S543, S544, S546, and S549 each carry phosphoserine. 2 F-actin binding regions span residues 530–658 and 659–801; these read TSYQ…FYDS and SEQI…VTAV. Over residues 540-552 the composition is skewed to low complexity; that stretch reads RMQSSVSESSFQM. The interaction with YWHAB stretch occupies residues 554–560; sequence RSLGSVP. Position 558 is a phosphoserine; by PKA (S558). Composition is skewed to polar residues over residues 558–569 and 592–606; these read SVPQQNGFSGVS and NQTAAPFSPTQSVTS. At S599 the chain carries Phosphoserine. Residues 602 to 809 are interaction with YWHAB; sequence QSVTSPIPDF…AVSSIKIAQP (208 aa). T605 bears the Phosphothreonine; by PKA and CaMK2 mark. S606 bears the Phosphoserine mark. Composition is skewed to pro residues over residues 609–625 and 639–650; these read PDFPAPPPYSAVSPPPE and AQPPPWPQPAPW. The tract at residues 610–621 is interaction with BAG3; sequence DFPAPPPYSAVS. The short motif at 614 to 617 is the PPPY motif element; it reads PPPY. A Phosphotyrosine modification is found at Y617. S621 is modified (phosphoserine). Residues 659–914 form an F-actin bundling activity region; it reads SEQIASRDER…LPASWKYSSN (256 aa). S700 and S724 each carry phosphoserine. 2 disordered regions span residues 741–799 and 833–868; these read MQSS…PQVT and VVSHNYTPKPSAPTPLVNAAPAGAGGPSNELPGMSG. The interval 745 to 898 is actin binding; the sequence is AKQKTPPPVA…DTVQAHTVRA (154 aa). T749 carries the phosphothreonine modification. The span at 756 to 782 shows a compositional bias: low complexity; the sequence is KPAVKTSSSSQPVAPVSPVWSPGVAPA. Phosphoserine is present on residues S772 and S776. Residues 786-799 show a composition bias toward polar residues; that stretch reads AFSTTNPPNPPQVT. The segment at 808–1153 is interaction with FLNC; that stretch reads QPTCPPARPA…EAFRPRNIEE (346 aa). 3 positions are modified to phosphoserine: S900, S904, and S908. The tract at residues 933–957 is disordered; the sequence is LAAIKSQPPGAQASKTSKKKGKKPL. The segment at 999–1018 is interaction with ZYX; that stretch reads PAMKQALPPRQADIGSPTNA. 3 positions are modified to phosphoserine: S1014, S1055, and S1090.

Belongs to the synaptopodin family. In terms of assembly, may self-associate in muscle cells under oxidative stress. Binds F-actin. Interacts with ACTN2; ACTN2 is proposed to anchor SYOP2 at Z lines in mature myocytes. Interacts with AKAP6, PPP3CA and CAMK2A. Interacts (phosphorylated form) with YWHAB; YWHAB competes with ACTN2 for interaction with SYNPO2. Interacts with KPNA2; mediating nuclear import of SYNOP2; dependent on interaction with YWHAB. Interacts with IPO13; may be implicated in SYNOP2 nuclear import. Interacts with ZYX, FLNC, ILK. Interacts with BAG3 (via WW 1 domain). May associate with the CASA complex consisting of HSPA8, HSPB8 and BAG3. Interacts with VPS18. Phosphorylated by PKA, and by CaMK2 at multiple sites. Dephosphorylated by calcineurin at Ser-558 and Thr-605; abrogating interaction with YWHAB and impairing nuclear import.

Its subcellular location is the nucleus. The protein localises to the cytoplasm. It localises to the cytoskeleton. The protein resides in the myofibril. It is found in the sarcomere. Its subcellular location is the z line. The protein localises to the cell junction. It localises to the focal adhesion. Functionally, has an actin-binding and actin-bundling activity. Can induce the formation of F-actin networks. At the sarcomeric Z lines is proposed to act as adapter protein that links nascent myofibers to the sarcolemma via ZYX and may play a role in early assembly and stabilization of the Z lines. Involved in autophagosome formation. May play a role in chaperone-assisted selective autophagy (CASA) involved in Z lines maintenance in striated muscle under mechanical tension; may link the client-processing CASA chaperone machinery to a membrane-tethering and fusion complex providing autophagosome membranes. Involved in regulation of cell migration. May be a tumor suppressor. The chain is Synaptopodin-2 (Synpo2) from Rattus norvegicus (Rat).